Reading from the N-terminus, the 478-residue chain is Probable cytosolic Fe-S cluster assembly factor CPIJ010948 (478 aa).

[4Fe-4S] cluster contacts are provided by Cys23, Cys69, Cys72, Cys75, Cys189, Cys245, Cys396, and Cys400.

This sequence belongs to the NARF family.

Component of the cytosolic iron-sulfur (Fe/S) protein assembly machinery. Required for maturation of extramitochondrial Fe/S proteins. The chain is Probable cytosolic Fe-S cluster assembly factor CPIJ010948 from Culex quinquefasciatus (Southern house mosquito).